Here is a 284-residue protein sequence, read N- to C-terminus: uncharacterized protein (284 aa).

A helical transmembrane segment spans residues 12–32 (ILFILFVVAFCVYLVPRVAIN).

The protein belongs to the serine esterase family.

It is found in the membrane. This is an uncharacterized protein from Escherichia coli O157:H7.